A 466-amino-acid polypeptide reads, in one-letter code: MAKTLYEKLFDAHVVYEAENETPLLYIDRHLVHEVTSPQAFDGLRAHGRPVRQPGKTFATMDHNVSTQTKDINACGEMARIQMQELIKNCKEFGVELYDLNHPYQGIVHVMGPEQGVTLPGMTIVCGDSHTATHGAFGALAFGIGTSEVEHVLATQTLKQGRAKTMKIEVQGKAAPGITAKDIVLAIIGKTGSAGGTGHVVEFCGEAIRDLSMEGRMTLCNMAIEMGAKAALVAPDETTFNYVKGRLHAPKGKDFDDAVAYWKTLQTDEGATFDTVVTLQAEEISPQVTWGTNPGQVISVNDNIPDPASFADPVERASAEKALAYMGLKPGIPLTEVAIDKVFIGSCTNSRIEDLRAAAEIAKGRKVAPGVQALVVPGSGPVKAQAEAEGLDKIFIEAGFEWRLPGCSMCLAMNNDRLNPGERCASTSNRNFEGRQGRGGRTHLVSPAMAAAAAVTGHFADIRNIK.

Residues Cys-347, Cys-407, and Cys-410 each coordinate [4Fe-4S] cluster.

Belongs to the aconitase/IPM isomerase family. LeuC type 1 subfamily. Heterodimer of LeuC and LeuD. [4Fe-4S] cluster serves as cofactor.

It carries out the reaction (2R,3S)-3-isopropylmalate = (2S)-2-isopropylmalate. Its pathway is amino-acid biosynthesis; L-leucine biosynthesis; L-leucine from 3-methyl-2-oxobutanoate: step 2/4. Functionally, catalyzes the isomerization between 2-isopropylmalate and 3-isopropylmalate, via the formation of 2-isopropylmaleate. The sequence is that of 3-isopropylmalate dehydratase large subunit from Shigella flexneri.